Here is a 436-residue protein sequence, read N- to C-terminus: Gamma-glutamyl phosphate reductase (436 aa).

Belongs to the gamma-glutamyl phosphate reductase family.

It localises to the cytoplasm. The enzyme catalyses L-glutamate 5-semialdehyde + phosphate + NADP(+) = L-glutamyl 5-phosphate + NADPH + H(+). Its pathway is amino-acid biosynthesis; L-proline biosynthesis; L-glutamate 5-semialdehyde from L-glutamate: step 2/2. Functionally, catalyzes the NADPH-dependent reduction of L-glutamate 5-phosphate into L-glutamate 5-semialdehyde and phosphate. The product spontaneously undergoes cyclization to form 1-pyrroline-5-carboxylate. The sequence is that of Gamma-glutamyl phosphate reductase from Polaromonas sp. (strain JS666 / ATCC BAA-500).